The sequence spans 318 residues: DNA repair nuclease/redox regulator APEX1 (318 aa).

The interval 1 to 59 (MPKRGKKGAVVEDAEEPKTEPEAKKSKAGAKKNEKEAVGEGAVLYEDPPDQKTSPSGKS) is disordered. The tract at residues 2–33 (PKRGKKGAVVEDAEEPKTEPEAKKSKAGAKKN) is necessary for interaction with YBX1, binding to RNA, association together with NPM1 to rRNA, endoribonuclease activity on abasic RNA and localization in the nucleoli. 2 positions are modified to N6-acetyllysine; by EP300: Lys6 and Lys7. The short motif at 8 to 13 (GAVVED) is the Nuclear localization signal (NLS) element. Residues 16–38 (EPKTEPEAKKSKAGAKKNEKEAV) show a composition bias toward basic and acidic residues. The interval 23–33 (AKKSKAGAKKN) is necessary for interaction with NPM1 and for efficient rRNA binding. N6-acetyllysine occurs at positions 27, 31, 32, and 35. Ser54 is subject to Phosphoserine. A Nuclear export signal (NES) motif is present at residues 64-80 (ICSWNVDGLRAWIKKKG). At Cys65 the chain carries S-nitrosocysteine; alternate. Cys65 and Cys93 are disulfide-bonded. Asp70 is a binding site for Mg(2+). Cys93 carries the S-nitrosocysteine; alternate modification. Glu96 contacts Mg(2+). Tyr171 is a catalytic residue. Lys197 carries the N6-acetyllysine modification. Residues Asp210 and Asn212 each contribute to the Mg(2+) site. Asp210 (proton donor/acceptor) is an active-site residue. At Thr233 the chain carries Phosphothreonine; by CDK5. Residues 289–318 (QSVLPALCDSKIRSKALGSDHCPITLYLAL) are mitochondrial targeting sequence (MTS). Asp308 is a Mg(2+) binding site. At Cys310 the chain carries S-nitrosocysteine.

This sequence belongs to the DNA repair enzymes AP/ExoA family. As to quaternary structure, monomer. Homodimer; disulfide-linked. Component of the SET complex, composed of at least APEX1, SET, ANP32A, HMGB2, NME1 and TREX1. Associates with the dimer XRCC5/XRCC6 in a DNA-dependent manner. Interacts with SIRT1; the interaction is increased in the context of genotoxic stress. Interacts with HDAC1, HDAC2 and HDAC3; the interactions are not dependent on the APEX1 acetylation status. Interacts with XRCC1; the interaction is induced by SIRT1 and increased with the APEX1 acetylated form. Interacts with NPM1 (via N-terminal domain); the interaction is RNA-dependent and decreases in hydrogen peroxide-damaged cells. Interacts (via N-terminus) with YBX1 (via C-terminus); the interaction is increased in presence of APEX1 acetylated at Lys-6 and Lys-7. Interacts with HNRNPL; the interaction is DNA-dependent. Interacts (via N-terminus) with KPNA1 and KPNA2. Interacts with TXN; the interaction stimulates the FOS/JUN AP-1 complex DNA-binding activity in a redox-dependent manner. Interacts with GZMA, KRT8, MDM2, POLB, PRDX6, PRPF19, RPLP0, TOMM20 and WDR77. Binds to CDK5. It depends on Mg(2+) as a cofactor. Mn(2+) serves as cofactor. In terms of processing, phosphorylated. Phosphorylation by kinase PKC or casein kinase CK2 results in enhanced redox activity that stimulates binding of the FOS/JUN AP-1 complex to its cognate binding site. AP-endodeoxyribonuclease activity is not affected by CK2-mediated phosphorylation. Phosphorylation of Thr-233 by CDK5 in response to MPP(+)/MPTP (1-methyl-4-phenylpyridinium) reduces AP-endodeoxyribonuclease activity resulting in accumulation of DNA damage and contributing to neuronal death. Acetylated on Lys-6 and Lys-7. Acetylation is increased by the transcriptional coactivator EP300 acetyltransferase, genotoxic agents like H(2)O(2) and methyl methanesulfonate (MMS). Acetylation increases its binding affinity to the negative calcium response element (nCaRE) DNA promoter. The acetylated form induces a stronger binding of YBX1 to the Y-box sequence in the MDR1 promoter than the unacetylated form. Deacetylated on lysines. Lys-6 and Lys-7 are deacetylated by SIRT1. Post-translationally, cleaved at Lys-31 by granzyme A to create the mitochondrial form; leading in reduction of binding to DNA, AP endodeoxyribonuclease activity, redox activation of transcription factors and to enhanced cell death. Cleaved by granzyme K; leading to intracellular ROS accumulation and enhanced cell death after oxidative stress. In terms of processing, cys-69 and Cys-93 are nitrosylated in response to nitric oxide (NO) and lead to the exposure of the nuclear export signal (NES). Ubiquitinated by MDM2; leading to translocation to the cytoplasm and proteasomal degradation. The mitochondrial form is expressed in liver (at protein level). Thymus.

The protein localises to the nucleus. Its subcellular location is the nucleolus. It localises to the nucleus speckle. It is found in the endoplasmic reticulum. The protein resides in the cytoplasm. The protein localises to the mitochondrion. It carries out the reaction Exonucleolytic cleavage in the 3'- to 5'-direction to yield nucleoside 5'-phosphates.. NPM1 stimulates endodeoxyribonuclease activity on double-stranded DNA with AP sites, but inhibits endoribonuclease activity on single-stranded RNA containing AP sites. In terms of biological role, multifunctional protein that plays a central role in the cellular response to oxidative stress. The two major activities of APEX1 are DNA repair and redox regulation of transcriptional factors. Functions as an apurinic/apyrimidinic (AP) endodeoxyribonuclease in the DNA base excision repair (BER) pathway of DNA lesions induced by oxidative and alkylating agents. Initiates repair of AP sites in DNA by catalyzing hydrolytic incision of the phosphodiester backbone immediately adjacent to the damage, generating a single-strand break with 5'-deoxyribose phosphate and 3'-hydroxyl ends. Also incises at AP sites in the DNA strand of DNA/RNA hybrids, single-stranded DNA regions of R-loop structures, and single-stranded RNA molecules. Has 3'-5' exoribonuclease activity on mismatched deoxyribonucleotides at the 3' termini of nicked or gapped DNA molecules during short-patch BER. Possesses DNA 3' phosphodiesterase activity capable of removing lesions (such as phosphoglycolate) blocking the 3' side of DNA strand breaks. May also play a role in the epigenetic regulation of gene expression by participating in DNA demethylation. Acts as a loading factor for POLB onto non-incised AP sites in DNA and stimulates the 5'-terminal deoxyribose 5'-phosphate (dRp) excision activity of POLB. Plays a role in the protection from granzyme-mediated cellular repair leading to cell death. Also involved in the DNA cleavage step of class switch recombination (CSR). On the other hand, APEX1 also exerts reversible nuclear redox activity to regulate DNA binding affinity and transcriptional activity of transcriptional factors by controlling the redox status of their DNA-binding domain, such as the FOS/JUN AP-1 complex after exposure to IR. Involved in calcium-dependent down-regulation of parathyroid hormone (PTH) expression by binding to negative calcium response elements (nCaREs). Together with HNRNPL or the dimer XRCC5/XRCC6, associates with nCaRE, acting as an activator of transcriptional repression. Stimulates the YBX1-mediated MDR1 promoter activity, when acetylated at Lys-6 and Lys-7, leading to drug resistance. Also acts as an endoribonuclease involved in the control of single-stranded RNA metabolism. Plays a role in regulating MYC mRNA turnover by preferentially cleaving in between UA and CA dinucleotides of the MYC coding region determinant (CRD). In association with NMD1, plays a role in the rRNA quality control process during cell cycle progression. Associates, together with YBX1, on the MDR1 promoter. Together with NPM1, associates with rRNA. Binds DNA and RNA. The sequence is that of DNA repair nuclease/redox regulator APEX1 (APEX1) from Bos taurus (Bovine).